Consider the following 107-residue polypeptide: SH3 domain-binding glutamic acid-rich-like protein 2 (107 aa).

Residues 61 to 67 carry the SH3-binding motif; that stretch reads QGNPLPP.

It belongs to the SH3BGR family.

The protein resides in the nucleus. This chain is SH3 domain-binding glutamic acid-rich-like protein 2 (Sh3bgrl2), found in Mus musculus (Mouse).